The following is a 217-amino-acid chain: MKIVILLLVAYLLGSIPSGVWIGKLFFKKDIRQFGSGNTGTTNTFRVLGKPAGITVLLMDILKGTLATSLPYLFGLQGVNPLFFGVAAVLGHTFPIFANFKGGKAVATSAGMLLAYSPTFFIYSALIFVICLYLTSMVSLTSMISAVLITLSTIILPFTVPAILPTFNWLLTVIAIALTTFIFVRHRENIQRIKNGTESRLSFGLRAKKIKKKAVNK.

6 helical membrane-spanning segments follow: residues 3–23 (IVIL…VWIG), 56–76 (VLLM…LFGL), 78–98 (GVNP…PIFA), 120–140 (FFIY…MVSL), 142–162 (SMIS…TVPA), and 163–183 (ILPT…TFIF).

It belongs to the PlsY family. Probably interacts with PlsX.

Its subcellular location is the cell membrane. It catalyses the reaction an acyl phosphate + sn-glycerol 3-phosphate = a 1-acyl-sn-glycero-3-phosphate + phosphate. Its pathway is lipid metabolism; phospholipid metabolism. Catalyzes the transfer of an acyl group from acyl-phosphate (acyl-PO(4)) to glycerol-3-phosphate (G3P) to form lysophosphatidic acid (LPA). This enzyme utilizes acyl-phosphate as fatty acyl donor, but not acyl-CoA or acyl-ACP. This chain is Glycerol-3-phosphate acyltransferase, found in Enterococcus faecalis (strain ATCC 700802 / V583).